The primary structure comprises 186 residues: MGRYAREPDNATKSCKSRGSHLRVHFKNTHEAANAIKHMPLRRAQRFLKNVVEKKECVPFRRFNGGVGRCAQAKQWKTTQGRWPKKSAEFLLQLLRNAESNADYKGLDVDRLVIDHIQVNRAPCLRRRTYRAHGRINPYMSSPCHIEVILTEKEEVVAKATDEEPTKKKLSKKKLQRQKEKMMRSE.

The disordered stretch occupies residues 159–186 (KATDEEPTKKKLSKKKLQRQKEKMMRSE). Residues 177 to 186 (RQKEKMMRSE) are compositionally biased toward basic and acidic residues.

Belongs to the universal ribosomal protein uL22 family.

The sequence is that of Large ribosomal subunit protein uL22 (RpL17) from Phlebotomus papatasi (Sandfly).